The following is a 128-amino-acid chain: MAKLTKDELIEAFKEMTLIELSEFVKEFEEVFDVTAAAPVAVAAAGAAGGEAAAAEEKDEFDVVLEDAGAKKIGVIKAVRELVSGLGLKEAKELVEGAPKAILEGANKDDAEAAKAKLEEAGAKVTLK.

Belongs to the bacterial ribosomal protein bL12 family. As to quaternary structure, homodimer. Part of the ribosomal stalk of the 50S ribosomal subunit. Forms a multimeric L10(L12)X complex, where L10 forms an elongated spine to which 2 to 4 L12 dimers bind in a sequential fashion. Binds GTP-bound translation factors.

Forms part of the ribosomal stalk which helps the ribosome interact with GTP-bound translation factors. Is thus essential for accurate translation. The chain is Large ribosomal subunit protein bL12 from Corynebacterium glutamicum (strain R).